The chain runs to 632 residues: 1-deoxy-D-xylulose-5-phosphate synthase (632 aa).

Residues His77 and 118-120 (GHS) each bind thiamine diphosphate. Asp149 contributes to the Mg(2+) binding site. Thiamine diphosphate is bound by residues 150-151 (GA), Asn178, Tyr289, and Glu372. Position 178 (Asn178) interacts with Mg(2+).

The protein belongs to the transketolase family. DXPS subfamily. As to quaternary structure, homodimer. Mg(2+) is required as a cofactor. The cofactor is thiamine diphosphate.

The catalysed reaction is D-glyceraldehyde 3-phosphate + pyruvate + H(+) = 1-deoxy-D-xylulose 5-phosphate + CO2. It functions in the pathway metabolic intermediate biosynthesis; 1-deoxy-D-xylulose 5-phosphate biosynthesis; 1-deoxy-D-xylulose 5-phosphate from D-glyceraldehyde 3-phosphate and pyruvate: step 1/1. Functionally, catalyzes the acyloin condensation reaction between C atoms 2 and 3 of pyruvate and glyceraldehyde 3-phosphate to yield 1-deoxy-D-xylulose-5-phosphate (DXP). This chain is 1-deoxy-D-xylulose-5-phosphate synthase, found in Listeria innocua serovar 6a (strain ATCC BAA-680 / CLIP 11262).